The following is a 1026-amino-acid chain: Multidrug resistance protein MdtC (1026 aa).

Transmembrane regions (helical) follow at residues 15 to 35 (ILIA…LPVA), 333 to 353 (EVEE…FLFL), 360 to 380 (LIPA…MYLC), 387 to 407 (LSLM…IVVL), 431 to 451 (VGFT…PLLL), 463 to 483 (FAVT…TLTP), 528 to 548 (LVGV…IAIP), 853 to 873 (LILI…LYES), 897 to 917 (LFNA…IGIV), 953 to 973 (PIMM…LSGG), and 984 to 1004 (ITIV…TPVV).

This sequence belongs to the resistance-nodulation-cell division (RND) (TC 2.A.6) family. MdtC subfamily. As to quaternary structure, part of a tripartite efflux system composed of MdtA, MdtB and MdtC. MdtC forms a heteromultimer with MdtB.

It is found in the cell inner membrane. In Salmonella gallinarum (strain 287/91 / NCTC 13346), this protein is Multidrug resistance protein MdtC.